The chain runs to 113 residues: 2Fe-2S ferredoxin (113 aa).

Positions P2–N104 constitute a 2Fe-2S ferredoxin-type domain. [2Fe-2S] cluster-binding residues include C42, C48, C51, and C87.

It belongs to the adrenodoxin/putidaredoxin family. [2Fe-2S] cluster is required as a cofactor.

Its function is as follows. Ferredoxin are iron-sulfur proteins that transfer electrons in a wide variety of metabolic reactions. This is 2Fe-2S ferredoxin (fdx) from Haemophilus influenzae (strain ATCC 51907 / DSM 11121 / KW20 / Rd).